The sequence spans 425 residues: Histone-binding protein RBBP4-B (425 aa).

Alanine 2 carries the post-translational modification N-acetylalanine. WD repeat units follow at residues 32 to 125 (YDLV…NHEG), 126 to 175 (EVNR…RLRG), 176 to 223 (HQKE…KTIF), 225 to 270 (GHTA…HSVD), 271 to 314 (AHTA…HSFE), 315 to 371 (SHKD…FIHG), and 372 to 404 (GHTA…VWQM).

It belongs to the WD repeat RBAP46/RBAP48/MSI1 family. Binds directly to histone H4, probably via helix 1 of the histone fold, a region that is not accessible when histone H4 is in chromatin. Probably forms a large corepressor complex that contains ncor1, sin3a, hdac1-A and/or hdac1-B, hdac2, rbbp4-A and/or rbbp4-B and possibly rbbp7.

The protein localises to the nucleus. The protein resides in the chromosome. It is found in the telomere. Core histone-binding subunit that may target chromatin assembly factors, chromatin remodeling factors and histone deacetylases to their histone substrates in a manner that is regulated by nucleosomal DNA. Component of several complexes which regulate chromatin metabolism. The sequence is that of Histone-binding protein RBBP4-B (rbbp4-b) from Xenopus laevis (African clawed frog).